We begin with the raw amino-acid sequence, 203 residues long: Small ribosomal subunit protein uS4 (203 aa).

One can recognise an S4 RNA-binding domain in the interval 93–153; that stretch reads RRLDNIVYRL…DKSKNLQQVK (61 aa).

The protein belongs to the universal ribosomal protein uS4 family. Part of the 30S ribosomal subunit. Contacts protein S5. The interaction surface between S4 and S5 is involved in control of translational fidelity.

In terms of biological role, one of the primary rRNA binding proteins, it binds directly to 16S rRNA where it nucleates assembly of the body of the 30S subunit. With S5 and S12 plays an important role in translational accuracy. The protein is Small ribosomal subunit protein uS4 of Lactobacillus gasseri (strain ATCC 33323 / DSM 20243 / BCRC 14619 / CIP 102991 / JCM 1131 / KCTC 3163 / NCIMB 11718 / NCTC 13722 / AM63).